The sequence spans 587 residues: Tripartite motif-containing protein 29 (587 aa).

Positions Met-1–Ser-71 are disordered. Residues Ser-21, Ser-28, Ser-58, and Ser-104 each carry the phosphoserine modification. Position 106 is a phosphotyrosine (Tyr-106). The B box-type zinc finger occupies Phe-220–Val-260. Zn(2+)-binding residues include Cys-225, His-228, Cys-247, and His-252. Residues Thr-259–Asp-348 are a coiled coil. Thr-476 bears the Phosphothreonine mark. Ser-489 carries the post-translational modification Phosphoserine.

In terms of assembly, interacts with VIM and HINT1. Interacts with IKBKG/NEMO. Interacts with STING1.

The protein resides in the cytoplasm. It is found in the lysosome. Functionally, plays a crucial role in the regulation of macrophage activation in response to viral or bacterial infections within the respiratory tract. Mechanistically, TRIM29 interacts with IKBKG/NEMO in the lysosome where it induces its 'Lys-48' ubiquitination and subsequent degradation. In turn, the expression of type I interferons and the production of pro-inflammatory cytokines are inhibited. Additionally, induces the 'Lys-48' ubiquitination of STING1 in a similar way, leading to its degradation. The chain is Tripartite motif-containing protein 29 (Trim29) from Mus musculus (Mouse).